We begin with the raw amino-acid sequence, 861 residues long: MAEILLTSVINKSVEIAGNLLIQEGKRLYWLKEDIDWLQREMRHIRSYVDNAKAKEAGGDSRVKNLLKDIQELAGDVEDLLDDFLPKIQQSNKFNYCLKRSSFADEFAMEIEKIKRRVVDIDRIRKTYNIIDTDNNNDDCVLLDRRRLFLHADETEIIGLDDDFNMLQAKLLNQDLHYGVVSIVGMPGLGKTTLAKKLYRLIRDQFECSGLVYVSQQPRASEILLDIAKQIGLTEQKMKENLEDNLRSLLKIKRYVILLDDIWDVEIWDDLKLVLPECDSKVGSRMIITSRNSNVGRYIGGESSLHALQPLESEKSFELFTKKIFNFDDNNSWANASPDLVNIGRNIVGRCGGIPLAIVVTAGMLRARERTEHAWNRVLESMGHKVQDGCAKVLALSYNDLPIASRPCFLYFGLYPEDHEIRAFDLINMWIAEKFIVVNSGNRREAEDLAEDVLNDLVSRNLIQLAKRTYNGRISSCRIHDLLHSLCVDLAKESNFFHTAHDAFGDPGNVARLRRITFYSDNVMIEFFRSNPKLEKLRVLFCFAKDPSIFSHMAYFDFKLLHTLVVVMSQSFQAYVTIPSKFGNMTCLRYLRLEGNICGKLPNSIVKLTRLETIDIDRRSLIQPPSGVWESKHLRHLCYRDYGQACNSCFSISSFYPNIYSLHPNNLQTLMWIPDKFFEPRLLHRLINLRKLGILGVSNSTVKMLSIFSPVLKALEVLKLSFSSDPSEQIKLSSYPHIAKLHLNVNRTMALNSQSFPPNLIKLTLAYFSVDRYILAVLKTFPKLRKLKMFICKYNEEKMDLSGEANGYSFPQLEVLHIHSPNGLSEVTCTDDVSMPKLKKLLLTGFHCRISLSERLKKLSK.

Positions 63–83 (VKNLLKDIQELAGDVEDLLDD) form a coiled coil. In terms of domain architecture, NB-ARC spans 162 to 388 (DDFNMLQAKL…LESMGHKVQD (227 aa)). An ATP-binding site is contributed by 185–192 (GMPGLGKT). LRR repeat units follow at residues 225 to 248 (LDIAKQIGLTEQKMKENLEDNLRS), 305 to 327 (LHALQPLESEKSFELFTKKIFNF), 388 to 411 (DGCAKVLALSYNDLPIASRPCFLY), 449 to 472 (LAEDVLNDLVSRNLIQLAKRTYNG), 510 to 536 (VARLRRITFYSDNVMIEFFRSNPKLEK), 585 to 608 (MTCLRYLRLEGNICGKLPNSIVKL), 609 to 631 (TRLETIDIDRRSLIQPPSGVWES), 652 to 680 (ISSFYPNIYSLHPNNLQTLMWIPDKFFEP), 689 to 710 (LRKLGILGVSNSTVKMLSIFSP), 712 to 735 (LKALEVLKLSFSSDPSEQIKLSSY), 736 to 758 (PHIAKLHLNVNRTMALNSQSFPP), 784 to 810 (LRKLKMFICKYNEEKMDLSGEANGYSF), and 811 to 835 (PQLEVLHIHSPNGLSEVTCTDDVSM).

Belongs to the disease resistance NB-LRR family. (Microbial infection) Interacts with tobamoviruses mouvement protein (e.g. tobacco mosaic virus (TMV) MP, AC P03583) at the plasma membrane; this interaction triggers defense responses leading to programmed cell death. As to quaternary structure, binds to HSP90 proteins (e.g. HSP90-1 and Nicotiana benthamiana HSP90-1); this interaction seems required for defense responses toward tobamoviruses.

The protein localises to the cell membrane. Its function is as follows. Inhibitor of viral mouvements which confers resistance to some tobamoviruses including tomato mosaic virus (ToMV) (e.g. strains L, B7 and ToMV1-2) and tobacco mosaic virus (TMV), but not to resistance-breaking isolates (e.g. LIIA and ToMV2(2)) ToMV and tomato brown rugose fruit virus (ToBRFV). Elicits a hypersensitive reaction in response to avirulent (Avr) movement proteins from resistance inducing tobamoviruses (e.g. ToMV and TMV) strains, thus leading to programmed cell death; this local extreme resistance requires rbcS. This Solanum lycopersicum (Tomato) protein is ToMV resistance protein Tm-2(2).